Here is a 481-residue protein sequence, read N- to C-terminus: MSGQADIALIGLAVMGQNLILNMDEKGFVVCAYNRTVAKVKEFLANEAKDTKVIGADSLEDMVSKLKSPRKVMLLVKAGSAVDDFIQQLVPLLSAGDVIIDGGNSEYQDTSRRCDELAKLGLLFVGSGVSGGEEGARHGPSLMPGGHEAAWPLIQPIFQAICAKADGEPCCEWVGDGGAGHFVKMVHNGIEYGDMQLICEAYHIMKSLGLSADQMADEFGKWNSAELDSFLIEITRDILKYKDGKGYLLERIRDTAGQKGTGKWTAIAALQYGVPVTLIGEAVFSRCLSALKDERVQASSVLKGPSTKAQVANLTKFLDDIKHALYCAKIVSYAQGFMLMREAARENKWRLNYGGIALMWRGGCIIRSVFLGNIKDAYTSQPELSNLLLDDFFKKAIERGQDSWREVVANAFRWGIPVPALSTALSFYDGYRTAKLPANLLQAQRDYFGAHTYELLGQEGQFHHTNWTGTGGNVSASTYQA.

NADP(+)-binding positions include 11–16, 34–36, 76–78, and N104; these read GLAVMG, NRT, and VKA. Residues N104 and 130 to 132 each bind substrate; that span reads SGG. The active-site Proton acceptor is K184. Substrate is bound at residue 187 to 188; that stretch reads HN. The active-site Proton donor is E191. Positions 192, 259, 286, 445, and 451 each coordinate substrate.

The protein belongs to the 6-phosphogluconate dehydrogenase family. As to quaternary structure, homodimer.

The catalysed reaction is 6-phospho-D-gluconate + NADP(+) = D-ribulose 5-phosphate + CO2 + NADPH. Its pathway is carbohydrate degradation; pentose phosphate pathway; D-ribulose 5-phosphate from D-glucose 6-phosphate (oxidative stage): step 3/3. Catalyzes the oxidative decarboxylation of 6-phosphogluconate to ribulose 5-phosphate and CO(2), with concomitant reduction of NADP to NADPH. The protein is 6-phosphogluconate dehydrogenase, decarboxylating (Pgd) of Drosophila melanogaster (Fruit fly).